Reading from the N-terminus, the 509-residue chain is ATP synthase subunit alpha (509 aa).

Position 171–178 (171–178 (GDRKTGKT)) interacts with ATP.

The protein belongs to the ATPase alpha/beta chains family. As to quaternary structure, F-type ATPases have 2 components, CF(1) - the catalytic core - and CF(0) - the membrane proton channel. CF(1) has five subunits: alpha(3), beta(3), gamma(1), delta(1), epsilon(1). CF(0) has three main subunits: a(1), b(2) and c(9-12). The alpha and beta chains form an alternating ring which encloses part of the gamma chain. CF(1) is attached to CF(0) by a central stalk formed by the gamma and epsilon chains, while a peripheral stalk is formed by the delta and b chains.

It localises to the cell inner membrane. It catalyses the reaction ATP + H2O + 4 H(+)(in) = ADP + phosphate + 5 H(+)(out). Its function is as follows. Produces ATP from ADP in the presence of a proton gradient across the membrane. The alpha chain is a regulatory subunit. The protein is ATP synthase subunit alpha of Ehrlichia canis (strain Jake).